We begin with the raw amino-acid sequence, 555 residues long: MAIEGGERTCGVHELICIRKVSPEAVGFLSAVGVFIVLMLLLFLYINKKFCFENVGGFPDLGSGYNTRTNSQDKMYNSYMDRDEPGSSSESEDEALGKYHEALSRTHNSRWPLVDSRQKSYAWETRQKYSPLSAEYDGYSTEASMEDGNCIQRMRRTPPLDELQPPPYQDDSGSPHLSCTPSEIGDAKCEISHCSNSPRCSFNKCPSEGSTGHEAESYHNKGYEDDVPSDSTAVLSPEDMSAQGSSSQLPKPFDPEPEAKYGTLDVTFDYDSERQKLLVTVTAVTDIPTYNRTGGNSWQVHLVLLPIKKQRAKTSIQRGPCPVFTETFKFNHVESEMIGNYAVRFRLYGVHRMKKEKIVGEKIFYLTKLNLQGKMSLPVILEPSYNPSGCDSQVSLSEASCGDSTSSCQSLQHGSVPEILIGLLYNATTGRLSAEVIKGSHFKNLAANRPPNTYVKLTLLNSMGQEMSKCKTSTRRGQPNPVYKETFVFQVALFQLSDVTLILSVYNRRSMKRKEMIGWISLGLNSSGEEELRHWTAMKESKGQQVCRWHALLES.

The Extracellular portion of the chain corresponds to methionine 1–glutamate 24. A helical; Signal-anchor for type III membrane protein membrane pass occupies residues alanine 25–asparagine 47. The Cytoplasmic portion of the chain corresponds to lysine 48–serine 555. 3 disordered regions span residues tyrosine 76 to glycine 97, threonine 157 to cysteine 179, and cysteine 205 to glutamate 258. A compositionally biased stretch (basic and acidic residues) spans threonine 211–glutamate 224. C2 domains are found at residues lysine 260 to valine 379 and serine 415 to histidine 550.

The protein belongs to the synaptotagmin family. As to quaternary structure, homodimer. Can also form heterodimers. As to expression, expressed in heart and testis. Expressed in brain (especially in the cerebellum).

The protein localises to the membrane. Its function is as follows. May be involved in the trafficking and exocytosis of secretory vesicles in non-neuronal tissues. Is Ca(2+)-independent. In Mus musculus (Mouse), this protein is Synaptotagmin-14 (Syt14).